A 394-amino-acid chain; its full sequence is Elongation factor Tu (394 aa).

A tr-type G domain is found at 10–204 (KPHINIGTIG…AVDDNIPTPE (195 aa)). The interval 19–26 (GHVDHGKT) is G1. 19-26 (GHVDHGKT) serves as a coordination point for GTP. Residue Thr26 coordinates Mg(2+). The tract at residues 60–64 (GITIN) is G2. The segment at 81-84 (DCPG) is G3. GTP-binding positions include 81-85 (DCPGH) and 136-139 (NKVD). Residues 136–139 (NKVD) are G4. Residues 174-176 (SAL) form a G5 region.

Belongs to the TRAFAC class translation factor GTPase superfamily. Classic translation factor GTPase family. EF-Tu/EF-1A subfamily. Monomer.

The protein resides in the cytoplasm. The enzyme catalyses GTP + H2O = GDP + phosphate + H(+). Functionally, GTP hydrolase that promotes the GTP-dependent binding of aminoacyl-tRNA to the A-site of ribosomes during protein biosynthesis. In Chlamydia pneumoniae (Chlamydophila pneumoniae), this protein is Elongation factor Tu.